A 338-amino-acid polypeptide reads, in one-letter code: 1-aminocyclopropane-1-carboxylate deaminase (338 aa).

N6-(pyridoxal phosphate)lysine is present on K51. S78 functions as the Nucleophile in the catalytic mechanism.

It belongs to the ACC deaminase/D-cysteine desulfhydrase family. Homotrimer. The cofactor is pyridoxal 5'-phosphate.

It carries out the reaction 1-aminocyclopropane-1-carboxylate + H2O = 2-oxobutanoate + NH4(+). Its function is as follows. Catalyzes a cyclopropane ring-opening reaction, the irreversible conversion of 1-aminocyclopropane-1-carboxylate (ACC) to ammonia and alpha-ketobutyrate. Allows growth on ACC as a nitrogen source. The chain is 1-aminocyclopropane-1-carboxylate deaminase from Pseudomonas sp. (strain ACP).